The primary structure comprises 4377 residues: Ankyrin-3 (4377 aa).

Positions 1–44 (MAHAASQLKKNRDLEINAEEEPEKKRKHRKRSRDRKKKSDANAS) are disordered. Positions 25-38 (KRKHRKRSRDRKKK) are enriched in basic residues. S39 carries the post-translational modification Phosphoserine. ANK repeat units lie at residues 73 to 102 (NGLN…NVDA), 106 to 135 (KGNT…NVNA), 139 to 168 (NGFT…SQSL), 172 to 201 (DGFT…KGKV), 203 to 230 (LPAL…NADV), 234 to 263 (SGFT…AVDF), 267 to 296 (NDIT…KIDA), 300 to 329 (DGLT…PILS), 333 to 362 (NGLS…PVDD), 366 to 395 (DYLT…NPNA), 399 to 428 (NGFT…SIQA), 432 to 461 (SGLT…SPNT), 465 to 494 (RGET…QVEA), 498 to 527 (DDQT…SPNA), 531 to 560 (SGYT…SLSI), 564 to 593 (KGFT…SPDA), 597 to 626 (SGLT…SPHA), 630 to 659 (NGYT…DANA), 663 to 692 (QGIA…NVNL), 696 to 725 (SGLT…HVDA), 729 to 758 (MGYT…KVNA), 762 to 791 (NGYT…SPNE), and 795 to 825 (NGNT…TMTT). Residue T468 is modified to Phosphoserine. S623 bears the Phosphoserine mark. Phosphoserine is present on residues T765 and E791. Phosphoserine is present on residues S847, S861, S867, S913, S916, S922, S957, S959, and S1113. 2 ZU5 domains span residues 984–1139 (FLVS…VVSR) and 1141–1288 (KQES…LADC). Residues 1273–1407 (VSFTTNVSAR…SIKIRDTSQE (135 aa)) form a UPA domain region. Phosphoserine is present on residues S1445, S1459, and S1470. The segment covering 1519–1539 (SGFTSLSSSSSNTPSASPLKS) has biased composition (low complexity). Positions 1519–1540 (SGFTSLSSSSSNTPSASPLKSI) are disordered. Phosphoserine is present on residues S1622, S1625, S1632, I1651, L1658, S1984, S2111, S2123, and S2126. Disordered regions lie at residues 1968-1987 (VDNK…SPED), 2107-2159 (TILE…VPIP), 2176-2245 (YDPS…EETH), 2299-2322 (AVSP…DNQM), 2383-2433 (FPCS…ISDD), 2474-2508 (DVSH…KIAT), 2588-2751 (LTEV…VKKI), 2795-2824 (QSNE…MPDS), 3036-3067 (PPLE…DVFD), 3131-3272 (TFYT…KKHH), 3298-3516 (PVIR…SVFP), 3538-3607 (KGLD…HEGK), 3635-3718 (GEHT…DPKL), 3868-3897 (KATS…QSEK), and 4019-4090 (KKMQ…CERT). A compositionally biased stretch (basic and acidic residues) spans 1977 to 1986 (PKSDKGHSPE). Basic and acidic residues predominate over residues 2115 to 2136 (FSQHDQDKSPLSDSGFETRSEK). Positions 2137–2146 (TPSAPQSAES) are enriched in polar residues. Over residues 2299-2308 (AVSPDVHKSA) the composition is skewed to basic and acidic residues. Over residues 2390 to 2399 (GQQEEEELTA) the composition is skewed to acidic residues. A compositionally biased stretch (polar residues) spans 2407 to 2417 (LESSRVNTPVS). Basic and acidic residues-rich tracts occupy residues 2497–2508 (GSDKRSREKIAT) and 2588–2612 (LTEV…PEKK). Positions 2622-2631 (SSQSPTSSSP) are enriched in low complexity. Residues 2706–2716 (SGFQLKQSKLS) are compositionally biased toward polar residues. Residues 2720–2742 (LKFEQGTHAKSKDMSQEDRKSDG) are compositionally biased toward basic and acidic residues. Positions 2796–2807 (SNEIVVNDSGSD) are enriched in polar residues. Polar residues-rich tracts occupy residues 3154-3186 (EQVS…SKTP) and 3214-3224 (KSTSLKQTTVE). Composition is skewed to basic and acidic residues over residues 3227–3242 (AVER…DSNQ) and 3335–3361 (KLKE…KELE). Residues 3377 to 3402 (SPQNEIAQNGNNDQSITECSIATTAE) are compositionally biased toward polar residues. Residues 3409-3428 (ATEIDSLDGYDLQDEDDGLT) show a composition bias toward acidic residues. Basic and acidic residues-rich tracts occupy residues 3465–3481 (EVIE…DKPP) and 3549–3575 (RGDD…EDRS). The segment covering 3576-3598 (PATTPDTTPARTPTDESTPTSEP) has biased composition (low complexity). Residues 3637–3651 (HTSEGKSGDQGEGDK) are compositionally biased toward basic and acidic residues. Composition is skewed to polar residues over residues 3654 to 3669 (VTAT…TVET), 3676 to 3713 (ETPT…NTSK), 3880 to 3897 (HMSN…QSEK), and 4033 to 4052 (SRNT…VTTK). Positions 4053 to 4076 (SARDKKTEAAPLKSKSEKAGSEKR) are enriched in basic and acidic residues. Residues 4090–4174 (TDIRMAIVAD…DIVTLLEGPI (85 aa)) form the Death domain. Phosphoserine occurs at positions 4211 and 4229. Disordered regions lie at residues 4251-4298 (NGSH…EPAS) and 4323-4377 (PVSM…KSHS). Residues 4268-4277 (PESQNDVGKQ) show a composition bias toward polar residues. S4290 and S4298 each carry phosphoserine. Residues 4337–4347 (GKPRLSLHEEE) are compositionally biased toward basic and acidic residues. Position 4350 is a phosphoserine (S4350). Positions 4362–4377 (VKTKKEIRHVEKKSHS) are enriched in basic residues.

In terms of assembly, directly interacts with DMD and betaDAG1. This interaction does not interfere with binding between DMD and betaDAG1. It is also required for DMD and betaDAG1 retention at costameres. Interacts (via N-terminal ANK repeats) with SCHIP1 isoform 5 (via C-terminus); this interaction is required for the localization at axon initial segments (AISs) and nodes of Ranvier (NRs). May be a constituent of a NFASC/NRCAM/ankyrin G complex. Interacts with RHBG. Interacts with PLEC and FLNC. Interacts with KCNA1; this inhibits channel activity. Interacts (via ANK repeats) with IQCJ-SCHIP1; required for IQCJ-SCHIP1 localization at axon initial segments (AIS) and nodes of Ranvier. Interacts with SCHIP1. Interacts with SCN5A. Interacts with PKP2 and GJA1/CX43. As to expression, expressed in brain, neurons, muscles and other tissues.

The protein localises to the cytoplasm. It is found in the cytoskeleton. The protein resides in the cell projection. It localises to the axon. Its subcellular location is the cell membrane. The protein localises to the sarcolemma. It is found in the postsynaptic cell membrane. The protein resides in the lysosome. It localises to the T-tubule. Its subcellular location is the golgi apparatus. Its function is as follows. Membrane-cytoskeleton linker. May participate in the maintenance/targeting of ion channels and cell adhesion molecules at the nodes of Ranvier and axonal initial segments. In skeletal muscle, required for costamere localization of DMD and betaDAG1. Regulates KCNA1 channel activity in function of dietary Mg(2+) levels, and thereby contributes to the regulation of renal Mg(2+) reabsorption. Required for intracellular adhesion and junctional conductance in myocytes, potentially via stabilization of GJA1/CX43 protein abundance and promotion of PKP2, GJA1/CX43, and SCN5A/Nav1.5 localization to cell-cell junctions. In terms of biological role, may be part of a Golgi-specific membrane cytoskeleton in association with beta-spectrin. This chain is Ankyrin-3, found in Homo sapiens (Human).